A 30-amino-acid polypeptide reads, in one-letter code: Cytochrome b6-f complex subunit 8 (30 aa).

The chain crosses the membrane as a helical span at residues 4–24; sequence IISLGWGSLLAIFSFSIALVV.

Belongs to the PetN family. The 4 large subunits of the cytochrome b6-f complex are cytochrome b6, subunit IV (17 kDa polypeptide, PetD), cytochrome f and the Rieske protein, while the 4 small subunits are PetG, PetL, PetM and PetN. The complex functions as a dimer.

The protein localises to the plastid. It is found in the chloroplast thylakoid membrane. In terms of biological role, component of the cytochrome b6-f complex, which mediates electron transfer between photosystem II (PSII) and photosystem I (PSI), cyclic electron flow around PSI, and state transitions. The polypeptide is Cytochrome b6-f complex subunit 8 (Gracilaria tenuistipitata var. liui (Red alga)).